We begin with the raw amino-acid sequence, 208 residues long: ATP-dependent Clp protease proteolytic subunit (208 aa).

The active-site Nucleophile is the Ser105. Residue His130 is part of the active site.

It belongs to the peptidase S14 family. In terms of assembly, fourteen ClpP subunits assemble into 2 heptameric rings which stack back to back to give a disk-like structure with a central cavity, resembling the structure of eukaryotic proteasomes.

It localises to the cytoplasm. The catalysed reaction is Hydrolysis of proteins to small peptides in the presence of ATP and magnesium. alpha-casein is the usual test substrate. In the absence of ATP, only oligopeptides shorter than five residues are hydrolyzed (such as succinyl-Leu-Tyr-|-NHMec, and Leu-Tyr-Leu-|-Tyr-Trp, in which cleavage of the -Tyr-|-Leu- and -Tyr-|-Trp bonds also occurs).. Functionally, cleaves peptides in various proteins in a process that requires ATP hydrolysis. Has a chymotrypsin-like activity. Plays a major role in the degradation of misfolded proteins. The chain is ATP-dependent Clp protease proteolytic subunit from Xylella fastidiosa (strain M23).